The sequence spans 82 residues: Sec-independent protein translocase protein TatA (82 aa).

Residues 1-21 traverse the membrane as a helical segment; that stretch reads MLGFGPFELILIVVIIALLFG. Basic and acidic residues predominate over residues 36 to 47; it reads IKEFKQEMHEPS. The interval 36–82 is disordered; it reads IKEFKQEMHEPSPPRPQVTDIPSQRLDPVTGAPVSTESTVPASDRRS.

It belongs to the TatA/E family. As to quaternary structure, forms a complex with TatC.

It localises to the cell membrane. Its function is as follows. Part of the twin-arginine translocation (Tat) system that transports large folded proteins containing a characteristic twin-arginine motif in their signal peptide across membranes. TatA could form the protein-conducting channel of the Tat system. The chain is Sec-independent protein translocase protein TatA from Deinococcus deserti (strain DSM 17065 / CIP 109153 / LMG 22923 / VCD115).